A 145-amino-acid polypeptide reads, in one-letter code: Arginine repressor (145 aa).

The protein belongs to the ArgR family.

The protein resides in the cytoplasm. The protein operates within amino-acid biosynthesis; L-arginine biosynthesis [regulation]. Functionally, regulates arginine biosynthesis genes. The polypeptide is Arginine repressor (Streptococcus pyogenes serotype M3 (strain ATCC BAA-595 / MGAS315)).